The following is an 857-amino-acid chain: Dimethylglycine dehydrogenase, mitochondrial (857 aa).

Residues 1–43 (MLRLGALRLRGLALRSSQGRPSSAGLREGQESPPSPPEWKDRA) constitute a mitochondrion transit peptide. Residues 15–39 (RSSQGRPSSAGLREGQESPPSPPEW) form a disordered region. FAD-binding positions include 52-53 (CV), 73-74 (EK), and 80-88 (GSTWHAAGL). His-84 carries the tele-8alpha-FAD histidine modification. Residue Lys-107 is modified to N6-acetyllysine. The residue at position 141 (Lys-141) is an N6-acetyllysine; alternate. An N6-succinyllysine; alternate modification is found at Lys-141. The residue at position 161 (Lys-161) is an N6-acetyllysine. FAD is bound at residue Val-212. An N6-acetyllysine modification is found at Lys-216. FAD is bound at residue Trp-244. Residues Lys-310 and Lys-312 each carry the N6-succinyllysine modification. 2 positions are modified to N6-acetyllysine: Lys-328 and Lys-353. 390-395 (FGYGII) lines the FAD pocket. Lys-427, Lys-469, and Lys-516 each carry N6-acetyllysine; alternate. N6-succinyllysine; alternate is present on residues Lys-427, Lys-469, and Lys-516. 573–575 (ELT) is a (6S)-5,6,7,8-tetrahydrofolate binding site. Residue Lys-648 is modified to N6-acetyllysine; alternate. Position 648 is an N6-succinyllysine; alternate (Lys-648). (6S)-5,6,7,8-tetrahydrofolate contacts are provided by residues Tyr-669, 676 to 678 (ELY), and Tyr-737. At Lys-757 the chain carries N6-acetyllysine. N6-acetyllysine; alternate is present on Lys-786. Lys-786 carries the N6-succinyllysine; alternate modification. An N6-succinyllysine modification is found at Lys-788.

It belongs to the GcvT family. The cofactor is FAD.

It is found in the mitochondrion. The enzyme catalyses (6S)-5,6,7,8-tetrahydrofolyl-(gamma-L-Glu)(n) + N,N-dimethylglycine + oxidized [electron-transfer flavoprotein] + H(+) = (6R)-5,10-methylenetetrahydrofolyl-(gamma-L-Glu)(n) + sarcosine + reduced [electron-transfer flavoprotein]. Its pathway is amine and polyamine degradation; betaine degradation; sarcosine from betaine: step 2/2. Functionally, catalyzes the demethylation of N,N-dimethylglycine to sarcosine. Also has activity with sarcosine in vitro. The protein is Dimethylglycine dehydrogenase, mitochondrial (Dmgdh) of Rattus norvegicus (Rat).